The chain runs to 319 residues: MYNPQLNKNGELSHLLSVEGLPKAILNQILDTAASFMEVSAREVKKVPLLRGKSVFNLFFENSTRTRTTFEIAAKRLSADVINLDINKSSASKGETLLDTIDNLCAMHANLFVVRHASSGAPYLIAEHLQRVGRDDIHVVNAGDGRHAHPTQGLLDMYTIRHYKKDFTQLRVAIVGDILHSRVARSDIHALTTLGVPEVRAIGPETLLPKHLDKLGVHVFHDMNEGLKDCDVVIMLRLQNERMTGALLPSAGEYFRHYGLTPQKLALAKPDAIVMHPGPMNRGVEIHSAVADGSQAVILPQVTFGIAVRMAVMSIVAGN.

Carbamoyl phosphate contacts are provided by Arg65 and Thr66. Residue Lys93 coordinates L-aspartate. Residues Arg115, His149, and Gln152 each contribute to the carbamoyl phosphate site. Positions 182 and 237 each coordinate L-aspartate. The carbamoyl phosphate site is built by Gly278 and Pro279.

This sequence belongs to the aspartate/ornithine carbamoyltransferase superfamily. ATCase family. Heterododecamer (2C3:3R2) of six catalytic PyrB chains organized as two trimers (C3), and six regulatory PyrI chains organized as three dimers (R2).

The enzyme catalyses carbamoyl phosphate + L-aspartate = N-carbamoyl-L-aspartate + phosphate + H(+). The protein operates within pyrimidine metabolism; UMP biosynthesis via de novo pathway; (S)-dihydroorotate from bicarbonate: step 2/3. Functionally, catalyzes the condensation of carbamoyl phosphate and aspartate to form carbamoyl aspartate and inorganic phosphate, the committed step in the de novo pyrimidine nucleotide biosynthesis pathway. This Dechloromonas aromatica (strain RCB) protein is Aspartate carbamoyltransferase catalytic subunit.